We begin with the raw amino-acid sequence, 96 residues long: Large ribosomal subunit protein uL23 (96 aa).

This sequence belongs to the universal ribosomal protein uL23 family. In terms of assembly, part of the 50S ribosomal subunit. Contacts protein L29, and trigger factor when it is bound to the ribosome.

Functionally, one of the early assembly proteins it binds 23S rRNA. One of the proteins that surrounds the polypeptide exit tunnel on the outside of the ribosome. Forms the main docking site for trigger factor binding to the ribosome. The protein is Large ribosomal subunit protein uL23 of Caldicellulosiruptor bescii (strain ATCC BAA-1888 / DSM 6725 / KCTC 15123 / Z-1320) (Anaerocellum thermophilum).